The chain runs to 302 residues: tRNA pseudouridine synthase B (302 aa).

Residue Asp45 is the Nucleophile of the active site.

This sequence belongs to the pseudouridine synthase TruB family. Type 1 subfamily.

The catalysed reaction is uridine(55) in tRNA = pseudouridine(55) in tRNA. Its function is as follows. Responsible for synthesis of pseudouridine from uracil-55 in the psi GC loop of transfer RNAs. In Francisella tularensis subsp. holarctica (strain FTNF002-00 / FTA), this protein is tRNA pseudouridine synthase B.